The following is a 505-amino-acid chain: ATP synthase subunit alpha (505 aa).

169-176 is a binding site for ATP; sequence GDRKTGKT.

Belongs to the ATPase alpha/beta chains family. F-type ATPases have 2 components, CF(1) - the catalytic core - and CF(0) - the membrane proton channel. CF(1) has five subunits: alpha(3), beta(3), gamma(1), delta(1), epsilon(1). CF(0) has three main subunits: a(1), b(2) and c(9-12). The alpha and beta chains form an alternating ring which encloses part of the gamma chain. CF(1) is attached to CF(0) by a central stalk formed by the gamma and epsilon chains, while a peripheral stalk is formed by the delta and b chains.

It localises to the cell membrane. The enzyme catalyses ATP + H2O + 4 H(+)(in) = ADP + phosphate + 5 H(+)(out). In terms of biological role, produces ATP from ADP in the presence of a proton gradient across the membrane. The alpha chain is a regulatory subunit. The protein is ATP synthase subunit alpha of Pediococcus pentosaceus (strain ATCC 25745 / CCUG 21536 / LMG 10740 / 183-1w).